Consider the following 409-residue polypeptide: Isovaleryl-CoA dehydrogenase, mitochondrial (409 aa).

The N-terminal 22 residues, 1–22, are a transit peptide targeting the mitochondrion; it reads MAAAQRWLPGILRRGDGLARRL. Residues 151-160 and 184-186 contribute to the FAD site; these read LAMSEPNSGS and WCT. Residue S160 coordinates substrate. Residues 206–207, Y261, and 268–271 contribute to the substrate site; these read SK and DLER. Residue E270 is the Proton acceptor of the active site. FAD contacts are provided by residues R296, Q307, and 364 to 368; that span reads QCLGG. Residue 391–392 participates in substrate binding; sequence AG. Residue 393–395 participates in FAD binding; the sequence is TSE.

It belongs to the acyl-CoA dehydrogenase family. In terms of assembly, homodimer. FAD serves as cofactor.

The protein localises to the mitochondrion. It carries out the reaction 3-methylbutanoyl-CoA + oxidized [electron-transfer flavoprotein] + H(+) = 3-methylbut-2-enoyl-CoA + reduced [electron-transfer flavoprotein]. It participates in amino-acid degradation; L-leucine degradation; (S)-3-hydroxy-3-methylglutaryl-CoA from 3-isovaleryl-CoA: step 1/3. The sequence is that of Isovaleryl-CoA dehydrogenase, mitochondrial from Oryza sativa subsp. japonica (Rice).